A 33-amino-acid chain; its full sequence is Neurotoxin Nk-3FTx (33 aa).

2 disulfides stabilise this stretch: cysteine 3–cysteine 24 and cysteine 6–cysteine 11.

Expressed by the venom gland.

The protein localises to the secreted. Its function is as follows. Possible voltage-gated potassium channel (Kv) blocker. Decreases amplitude of compound action potential and conduction velocity in toad sciatic nerve. Has only mild anticoagulant activity even at a concentration of 5ug/ml. Shows no cytotoxicity towards human cell lines. This Naja kaouthia (Monocled cobra) protein is Neurotoxin Nk-3FTx.